Here is a 722-residue protein sequence, read N- to C-terminus: Delta-like protein 1 (722 aa).

The signal sequence occupies residues 1 to 17 (MGRRSALALAVVSALLC). At 18 to 545 (QVWSSGVFEL…MESQGGPFPW (528 aa)) the chain is on the extracellular side. Residues 176 to 220 (FVCDEHYYGEGCSVFCRPRDDAFGHFTCGDRGEKMCDPGWKGQYC) enclose the DSL domain. 27 disulfides stabilise this stretch: Cys-178–Cys-187, Cys-191–Cys-203, Cys-211–Cys-220, Cys-225–Cys-236, Cys-229–Cys-242, Cys-244–Cys-253, Cys-256–Cys-267, Cys-262–Cys-273, Cys-275–Cys-284, Cys-291–Cys-303, Cys-297–Cys-313, Cys-315–Cys-324, Cys-331–Cys-342, Cys-336–Cys-351, Cys-353–Cys-362, Cys-369–Cys-380, Cys-374–Cys-390, Cys-392–Cys-401, Cys-408–Cys-419, Cys-413–Cys-428, Cys-430–Cys-439, Cys-446–Cys-457, Cys-451–Cys-466, Cys-468–Cys-477, Cys-484–Cys-495, Cys-489–Cys-504, and Cys-506–Cys-515. 3 consecutive EGF-like domains span residues 225–253 (CLPG…GRYC), 256–284 (CIRY…GLFC), and 291–324 (CTHH…GANC). The EGF-like 4; calcium-binding domain occupies 331–362 (CAPSPCKNGASCTDLEDSFSCTCPPGFYGKVC). 2 consecutive EGF-like domains span residues 369–401 (CADG…GFNC) and 408–439 (CGSS…GRYC). Residues 446 to 477 (CASSPCANGGTCRDSVNDFSCTCPPGYTGKNC) enclose the EGF-like 7; calcium-binding domain. An N-linked (GlcNAc...) asparagine glycan is attached at Asn-476. Residues 484–515 (CEHAPCHNGATCHQRGQRYMCECAQGYGGPNC) enclose the EGF-like 8 domain. The chain crosses the membrane as a helical span at residues 546-568 (VAVCAGVVLVLLLLLGCAAVVVC). The Cytoplasmic portion of the chain corresponds to 569–722 (VRLKLQKHQP…KDECVIATEV (154 aa)). Lys-613 participates in a covalent cross-link: Glycyl lysine isopeptide (Lys-Gly) (interchain with G-Cter in ubiquitin). A Phosphothreonine modification is found at Thr-638. The segment covering 655–664 (RDTHSKRDTK) has biased composition (basic and acidic residues). Residues 655-697 (RDTHSKRDTKCQSQSSAGEEKIAPTLRGGEIPDRKRPESVYST) are disordered. At Ser-693 the chain carries Phosphoserine; by PKB. The residue at position 696 (Ser-696) is a Phosphoserine. The segment at 719-722 (ATEV) is interaction with MAGI1.

Homodimer. Interacts with TJP1. Interacts with MMP14; inhibits DLL1-induced Notch signaling. Interacts with MAGI1 (via PDZ domain); forms a complex with CTNNB1 and CDH2 and promotes recruitment to the adherens junction and stabilization on the cell surface. Interacts with PSEN1; undergoes a presenilin-dependent gamma-secretase cleavage that releases a Dll1-intracellular form. Interacts with MFAP5. Interacts with MIB1. Interacts with NEURL1B; leads to ubiquitination. Interacts with NEURL1. Interacts with SYNJ2BP; enhances DLL1 protein stability, and promotes Notch signaling in endothelial cells. Interacts with MAGI1, MAGI2, MAGI3 and MPDZ. Interacts (via ubiquitin) with EPN1 (via IUM domain); binding with NOTCH1 attached to neighboring cell, promotes ligand ubiquitination and EPN1 interaction, leading to NECD transendocytosis and Notch signaling. Interacts with NOTCH1. Ubiquitinated by MIB (MIB1 or MIB2), leading to its endocytosis and subsequent degradation. Ubiquitinated; promotes recycling back to the plasma membrane and confers a strong affinity for NOTCH1. Multi-ubiquitination of Lys-613 by MIB1 promotes both cis and trans-interaction with NOTCH1, as well as activation of Notch signaling. Ubiquitinated by NEURL1B. In terms of processing, phosphorylated in a membrane association-dependent manner. Phosphorylation at Ser-696 requires the presence of Ser-693, whereas phosphorylation at Thr-638 and Ser-693 occurs independently of the other sites. Phosphorylation is required for full ligand activity in vitro and affects surface presentation, ectodomain shedding, and endocytosis. Post-translationally, cleaved by MMP14; negatively regulates DLL1-induced Notch signaling in HPCs, modulating B-lymphocyte differentiation in bone marrow. Undergoes two consecutive processing events: a shedding event, partially by ADAM10, that generates a soluble extracellular form and an intracellular membrane-anchored form, followed by a gamma-secretase cleavage releasing an intracellular fragment. O-fucosylated. Can be elongated to a disaccharide by MFNG. In the embryo, expressed in the paraxial mesoderm and nervous system. Expressed at high levels in adult heart and at lower levels, in adult lung. Highly expressed in satellite cells from masseter and tongue than in satellite cells from leg and extraocular muscle.?.

The protein resides in the apical cell membrane. Its subcellular location is the cell junction. The protein localises to the adherens junction. It localises to the membrane raft. It is found in the cell membrane. The protein resides in the nucleus. Its function is as follows. Transmembrane ligand protein of NOTCH1, NOTCH2 and NOTCH3 receptors that binds the extracellular domain (ECD) of Notch receptor in a cis and trans fashion manner. Following transinteraction, ligand cells produce mechanical force that depends of a clathrin-mediated endocytosis, requiring ligand ubiquitination, EPN1 interaction, and actin polymerisation; these events promote Notch receptor extracellular domain (NECD) transendocytosis and triggers Notch signaling through induction of cleavage, hyperphosphorylation, and nuclear accumulation of the intracellular domain of Notch receptors (NICD). Is required for embryonic development and maintenance of adult stem cells in many different tissues and immune systeme; the DLL1-induced Notch signaling is mediated through an intercellular communication that regulates cell lineage, cell specification, cell patterning and morphogenesis through effects on differentiation and proliferation. Plays a role in brain development at different level, namely by regulating neuronal differentiation of neural precursor cells via cell-cell interaction, most likely through the lateral inhibitory system in an endogenous level dependent-manner. During neocortex development, Dll1-Notch signaling transmission is mediated by dynamic interactions between intermediate neurogenic progenitors and radial glia; the cell-cell interactions are mediated via dynamic and transient elongation processes, likely to reactivate/maintain Notch activity in neighboring progenitors, and coordinate progenitor cell division and differentiation across radial and zonal boundaries. During cerebellar development, regulates Bergmann glial monolayer formation and its morphological maturation through a Notch signaling pathway. At the retina and spinal cord level, regulates neurogenesis by preventing the premature differentiation of neural progenitors and also by maintaining progenitors in spinal cord through Notch signaling pathway. Also controls neurogenesis of the neural tube in a progenitor domain-specific fashion along the dorsoventral axis. Maintains quiescence of neural stem cells and plays a role as a fate determinant that segregates asymmetrically to one daughter cell during neural stem cells mitosis, resulting in neuronal differentiation in Dll1-inheriting cell. Plays a role in immune systeme development, namely the development of all T-cells and marginal zone (MZ) B cells. Blocks the differentiation of progenitor cells into the B-cell lineage while promoting the emergence of a population of cells with the characteristics of a T-cell/NK-cell precursor. Upon MMP14 cleavage, negatively regulates Notch signaling in haematopoietic progenitor cells to specifically maintain normal B-cell development in bone marrow. Also plays a role during muscle development. During early development, inhibits myoblasts differentiation from the medial dermomyotomal lip and later regulates progenitor cell differentiation. Directly modulates cell adhesion and basal lamina formation in satellite cells through Notch signaling. Maintains myogenic progenitors pool by suppressing differentiation through down-regulation of MYOD1 and is required for satellite cell homing and PAX7 expression. During craniofacial and trunk myogenesis suppresses differentiation of cranial mesoderm-derived and somite-derived muscle via MYOD1 regulation but in cranial mesoderm-derived progenitors, is neither required for satellite cell homing nor for PAX7 expression. Also plays a role during pancreatic cell development. During type B pancreatic cell development, may be involved in the initiation of proximodistal patterning in the early pancreatic epithelium. Stimulates multipotent pancreatic progenitor cells proliferation and pancreatic growth by maintaining HES1 expression and PTF1A protein levels. During fetal stages of development, is required to maintain arterial identity and the responsiveness of arterial endothelial cells for VEGFA through regulation of KDR activation and NRP1 expression. Controls sprouting angiogenesis and subsequent vertical branch formation through regulation on tip cell differentiation. Negatively regulates goblet cell differentiation in intestine and controls secretory fat commitment through lateral inhibition in small intestine. Plays a role during inner ear development; negatively regulates auditory hair cell differentiation. Plays a role during nephron development through Notch signaling pathway. Regulates growth, blood pressure and energy homeostasis. In Mus musculus (Mouse), this protein is Delta-like protein 1 (Dll1).